Here is a 256-residue protein sequence, read N- to C-terminus: Tryptophan synthase alpha chain (256 aa).

Catalysis depends on proton acceptor residues Glu-45 and Asp-56.

The protein belongs to the TrpA family. As to quaternary structure, tetramer of two alpha and two beta chains.

It carries out the reaction (1S,2R)-1-C-(indol-3-yl)glycerol 3-phosphate + L-serine = D-glyceraldehyde 3-phosphate + L-tryptophan + H2O. It participates in amino-acid biosynthesis; L-tryptophan biosynthesis; L-tryptophan from chorismate: step 5/5. Functionally, the alpha subunit is responsible for the aldol cleavage of indoleglycerol phosphate to indole and glyceraldehyde 3-phosphate. This chain is Tryptophan synthase alpha chain, found in Christiangramia forsetii (strain DSM 17595 / CGMCC 1.15422 / KT0803) (Gramella forsetii).